A 190-amino-acid chain; its full sequence is Potassium-transporting ATPase KdpC subunit (190 aa).

Residues 10–30 (TFIFLLLITGGVYPLLTTALG) form a helical membrane-spanning segment.

Belongs to the KdpC family. In terms of assembly, the system is composed of three essential subunits: KdpA, KdpB and KdpC.

The protein localises to the cell inner membrane. Its function is as follows. Part of the high-affinity ATP-driven potassium transport (or Kdp) system, which catalyzes the hydrolysis of ATP coupled with the electrogenic transport of potassium into the cytoplasm. This subunit acts as a catalytic chaperone that increases the ATP-binding affinity of the ATP-hydrolyzing subunit KdpB by the formation of a transient KdpB/KdpC/ATP ternary complex. The sequence is that of Potassium-transporting ATPase KdpC subunit from Escherichia coli O157:H7.